Reading from the N-terminus, the 126-residue chain is Holo-[acyl-carrier-protein] synthase (126 aa).

Mg(2+) contacts are provided by aspartate 9 and glutamate 58.

The protein belongs to the P-Pant transferase superfamily. AcpS family. It depends on Mg(2+) as a cofactor.

It localises to the cytoplasm. It catalyses the reaction apo-[ACP] + CoA = holo-[ACP] + adenosine 3',5'-bisphosphate + H(+). Its function is as follows. Transfers the 4'-phosphopantetheine moiety from coenzyme A to a Ser of acyl-carrier-protein. The chain is Holo-[acyl-carrier-protein] synthase from Shewanella denitrificans (strain OS217 / ATCC BAA-1090 / DSM 15013).